The chain runs to 667 residues: MIVDYQDVDTVISGVDYFSSYNGNIENENCKLSDLFEQNVNNQFFQPNNTSLPPPTNQQPQPQPQQWDLMEDENCNSSFENSPQQPTSPLLISSQTSYPSDLSSNSSISHSPIENQLLDNNLDINNYLNKINIFNNHFQNSDLINTTFFNQFENNNYINNNNNKENNSYFYNNNVNIPNNNNLNINNNNNNNNNNNNNNNNNNNNNNNNNNNNNNNNNNNNNNNNNKNTVYNNVNIPNNNNFNLNLSNNNNNLNLTNNNNNKNSVNNNNVNISNNNNNNNFNVNLSNNNVNISNIPISNYYQQAAQTIFDDNFQTIQFNKEYPLNEHISQSTNKRMKISHHSHSLSNNNENSLSQPYFNNNNNNNNENENVYNIVNEQNPTFNPNQSNTHQQQEEQYQQHEEGQEEKEHEEEEKYQKQKPKIEIEELININLIKEKIEKLKNKFENENVICSEFLEKCFKFSSFPIFPIVESKLKFYQFEIDFSFSSYIESQKLDKIGLPSFKRPVQFLNTFYTQEIVNLDQELITRSQPIHDFIECISLIRPLLSLSSSSSSSSSSSSPSSSNELNSKLNMVQSVFNVVKSYQKTNTANVILQVLKKYAKEFKSRRILSEQQETNMNLWFDAHVNNPYPEEDEKVILGAVNNLSKSQIDNWFGNKRMRDKSNKKSL.

Disordered stretches follow at residues 44–108 (FFQP…NSSI), 179–232 (NNNN…TVYN), 249–268 (NNNN…VNNN), and 331–418 (STNK…YQKQ). A compositionally biased stretch (pro residues) spans 52–63 (LPPPTNQQPQPQ). A compositionally biased stretch (polar residues) spans 75–96 (CNSSFENSPQQPTSPLLISSQT). Over residues 97-108 (SYPSDLSSNSSI) the composition is skewed to low complexity. Over residues 334 to 343 (KRMKISHHSH) the composition is skewed to basic residues. Residues 344 to 379 (SLSNNNENSLSQPYFNNNNNNNNENENVYNIVNEQN) show a composition bias toward low complexity. A compositionally biased stretch (polar residues) spans 380 to 390 (PTFNPNQSNTH). A coiled-coil region spans residues 386-454 (QSNTHQQQEE…ENENVICSEF (69 aa)). The segment at residues 602 to 664 (EFKSRRILSE…NKRMRDKSNK (63 aa)) is a DNA-binding region (homeobox).

It is found in the nucleus. Its function is as follows. Putative transcription factor. The polypeptide is Homeobox protein 3 (hbx3) (Dictyostelium discoideum (Social amoeba)).